The primary structure comprises 167 residues: Histidinol dehydrogenase (167 aa).

Residues Gln-109 and His-112 each coordinate Zn(2+).

Belongs to the histidinol dehydrogenase family. Homodimer. The cofactor is Zn(2+).

The catalysed reaction is L-histidinol + 2 NAD(+) + H2O = L-histidine + 2 NADH + 3 H(+). The protein operates within amino-acid biosynthesis; L-histidine biosynthesis; L-histidine from 5-phospho-alpha-D-ribose 1-diphosphate: step 9/9. Its function is as follows. Catalyzes the sequential NAD-dependent oxidations of L-histidinol to L-histidinaldehyde and then to L-histidine. The polypeptide is Histidinol dehydrogenase (hisD) (Salmonella enteritidis).